A 319-amino-acid chain; its full sequence is Pantothenate kinase (319 aa).

Residue 96 to 103 participates in ATP binding; the sequence is GSVAVGKS.

This sequence belongs to the prokaryotic pantothenate kinase family.

It is found in the cytoplasm. The catalysed reaction is (R)-pantothenate + ATP = (R)-4'-phosphopantothenate + ADP + H(+). It participates in cofactor biosynthesis; coenzyme A biosynthesis; CoA from (R)-pantothenate: step 1/5. The protein is Pantothenate kinase of Bacillus velezensis (strain DSM 23117 / BGSC 10A6 / LMG 26770 / FZB42) (Bacillus amyloliquefaciens subsp. plantarum).